The chain runs to 429 residues: Glutamate-1-semialdehyde 2,1-aminomutase 1 (429 aa).

Lysine 268 carries the N6-(pyridoxal phosphate)lysine modification.

It belongs to the class-III pyridoxal-phosphate-dependent aminotransferase family. HemL subfamily. In terms of assembly, homodimer. The cofactor is pyridoxal 5'-phosphate.

Its subcellular location is the cytoplasm. It catalyses the reaction (S)-4-amino-5-oxopentanoate = 5-aminolevulinate. Its pathway is porphyrin-containing compound metabolism; protoporphyrin-IX biosynthesis; 5-aminolevulinate from L-glutamyl-tRNA(Glu): step 2/2. This chain is Glutamate-1-semialdehyde 2,1-aminomutase 1, found in Lysinibacillus sphaericus (strain C3-41).